The sequence spans 116 residues: Putative iron-sulfur cluster insertion protein ErpA (116 aa).

The iron-sulfur cluster site is built by cysteine 44, cysteine 108, and cysteine 110.

This sequence belongs to the HesB/IscA family. In terms of assembly, homodimer. It depends on iron-sulfur cluster as a cofactor.

Its function is as follows. Required for insertion of 4Fe-4S clusters. In Thiobacillus denitrificans (strain ATCC 25259 / T1), this protein is Putative iron-sulfur cluster insertion protein ErpA.